The primary structure comprises 143 residues: Nucleoside diphosphate kinase (143 aa).

Residues Lys-11, Phe-59, Arg-87, Thr-93, Arg-104, and Asn-114 each contribute to the ATP site. His-117 serves as the catalytic Pros-phosphohistidine intermediate.

The protein belongs to the NDK family. Homotetramer. The cofactor is Mg(2+).

The protein localises to the cytoplasm. It carries out the reaction a 2'-deoxyribonucleoside 5'-diphosphate + ATP = a 2'-deoxyribonucleoside 5'-triphosphate + ADP. The catalysed reaction is a ribonucleoside 5'-diphosphate + ATP = a ribonucleoside 5'-triphosphate + ADP. Functionally, major role in the synthesis of nucleoside triphosphates other than ATP. The ATP gamma phosphate is transferred to the NDP beta phosphate via a ping-pong mechanism, using a phosphorylated active-site intermediate. The protein is Nucleoside diphosphate kinase of Acinetobacter baylyi (strain ATCC 33305 / BD413 / ADP1).